The sequence spans 494 residues: Costunolide synthase (494 aa).

Residues Pro3 to Ser23 form a helical membrane-spanning segment. Cys432 lines the heme pocket.

Belongs to the cytochrome P450 family. The cofactor is heme.

The protein resides in the membrane. It catalyses the reaction germacra-1(10),4,11(13)-trien-12-oate + reduced [NADPH--hemoprotein reductase] + O2 = (+)-costunolide + oxidized [NADPH--hemoprotein reductase] + 2 H2O. Its function is as follows. Hydroxylates germacrene A acid to 6-alpha-hydroxy-germacrne A acid, a precursor of sesquiterpene lactones that spontaneously undergoes a lactonization which yields costunolide. Costunolide can then spontaneously conjugate to glutathione or cysteine. The chain is Costunolide synthase (CYP71BL3) from Cichorium intybus (Chicory).